A 94-amino-acid chain; its full sequence is Protein S100-A1 (94 aa).

2 consecutive EF-hand domains span residues 13–48 (INVF…FLDV) and 50–85 (KDAD…LTVA). 7 residues coordinate Ca(2+): Lys28, Glu33, Asp63, Asn65, Asp67, Glu69, and Glu74. Residue Cys86 is modified to S-nitrosocysteine.

This sequence belongs to the S-100 family. Dimer of either two alpha chains, or two beta chains, or one alpha and one beta chain. Also forms heterodimers with S100P. Interacts with AGER. Interacts with CAPZA1. Interacts with FKBP4. Interacts with RYR1 and RYR2. Interacts with CACYBP in a calcium-dependent manner. Interacts with PPP5C (via TPR repeats); the interaction is calcium-dependent and modulates PPP5C activity. Interacts with ATP2A2 and PLN in a Ca(2+)-dependent manner. Interacts with mitochondrial F1-ATPase subunits ATP5F1A and ATP5F1B; these interactions increase F1-ATPase activity. Glutathionylated; glutathionylation increases affinity to calcium about 10-fold. As to expression, although predominant among the water-soluble brain proteins, S100 is also found in a variety of other tissues.

It localises to the cytoplasm. The protein localises to the sarcoplasmic reticulum. Its subcellular location is the mitochondrion. In terms of biological role, small calcium binding protein that plays important roles in several biological processes such as Ca(2+) homeostasis, chondrocyte biology and cardiomyocyte regulation. In response to an increase in intracellular Ca(2+) levels, binds calcium which triggers conformational changes. These changes allow interactions with specific target proteins and modulate their activity. Regulates a network in cardiomyocytes controlling sarcoplasmic reticulum Ca(2+) cycling and mitochondrial function through interaction with the ryanodine receptors RYR1 and RYR2, sarcoplasmic reticulum Ca(2+)-ATPase/ATP2A2 and mitochondrial F1-ATPase. Facilitates diastolic Ca(2+) dissociation and myofilament mechanics in order to improve relaxation during diastole. This is Protein S100-A1 (S100a1) from Rattus norvegicus (Rat).